A 196-amino-acid polypeptide reads, in one-letter code: DnaA initiator-associating protein DiaA (196 aa).

An SIS domain is found at 34 to 196 (LVQSLLNGNK…DNTLFPHQDD (163 aa)).

Belongs to the SIS family. DiaA subfamily. In terms of assembly, homotetramer; dimer of dimers.

Functionally, required for the timely initiation of chromosomal replication via direct interactions with the DnaA initiator protein. This is DnaA initiator-associating protein DiaA from Enterobacter sp. (strain 638).